We begin with the raw amino-acid sequence, 326 residues long: uncharacterized protein (326 aa).

The region spanning Val15 to Glu76 is the S4 RNA-binding domain. Residue Asp147 is part of the active site.

Belongs to the pseudouridine synthase RluA family.

The enzyme catalyses a uridine in RNA = a pseudouridine in RNA. This is an uncharacterized protein from Mycoplasma pneumoniae (strain ATCC 29342 / M129 / Subtype 1) (Mycoplasmoides pneumoniae).